The following is a 249-amino-acid chain: Probable transcriptional regulatory protein Sfum_0996 (249 aa).

It belongs to the TACO1 family.

The protein resides in the cytoplasm. The sequence is that of Probable transcriptional regulatory protein Sfum_0996 from Syntrophobacter fumaroxidans (strain DSM 10017 / MPOB).